We begin with the raw amino-acid sequence, 317 residues long: Testis-specific Y-encoded protein 1 (317 aa).

Disordered regions lie at residues methionine 1–valine 39 and aspartate 91–proline 118. 2 stretches are compositionally biased toward basic and acidic residues: residues glutamine 15–glutamate 26 and glutamate 95–glutamine 112.

Belongs to the nucleosome assembly protein (NAP) family. Post-translationally, phosphorylated. As to expression, testis. Probably in spermatogonia.

The protein localises to the cytoplasm. The protein resides in the nucleus. In terms of biological role, may be involved in sperm differentiation and proliferation. The chain is Testis-specific Y-encoded protein 1 (TSPY1) from Bos taurus (Bovine).